A 288-amino-acid polypeptide reads, in one-letter code: S-methyl-5'-thioadenosine phosphorylase (288 aa).

Phosphate-binding positions include serine 12, 54–55 (RH), and 87–88 (SA). Position 186 (methionine 186) interacts with substrate. Threonine 187 is a binding site for phosphate. 210–212 (DYD) is a binding site for substrate.

It belongs to the PNP/MTAP phosphorylase family. MTAP subfamily. As to quaternary structure, homohexamer. Dimer of a homotrimer.

The catalysed reaction is S-methyl-5'-thioadenosine + phosphate = 5-(methylsulfanyl)-alpha-D-ribose 1-phosphate + adenine. Its pathway is amino-acid biosynthesis; L-methionine biosynthesis via salvage pathway; S-methyl-5-thio-alpha-D-ribose 1-phosphate from S-methyl-5'-thioadenosine (phosphorylase route): step 1/1. Functionally, catalyzes the reversible phosphorylation of S-methyl-5'-thioadenosine (MTA) to adenine and 5-methylthioribose-1-phosphate. Involved in the breakdown of MTA, a major by-product of polyamine biosynthesis. Responsible for the first step in the methionine salvage pathway after MTA has been generated from S-adenosylmethionine. Has broad substrate specificity with 6-aminopurine nucleosides as preferred substrates. The polypeptide is S-methyl-5'-thioadenosine phosphorylase (Chloroflexus aurantiacus (strain ATCC 29366 / DSM 635 / J-10-fl)).